We begin with the raw amino-acid sequence, 350 residues long: Protein O-mannose kinase (350 aa).

Met1 carries the post-translational modification N-acetylmethionine. The Cytoplasmic portion of the chain corresponds to 1 to 20 (MEKQPQNSRRGLAPREVPPA). The chain crosses the membrane as a helical; Signal-anchor for type II membrane protein span at residues 21-43 (VGLLLIMALMNTLLYLCLDHFFI). Residues 44–350 (APRQSTVDPT…AMMSQAREML (307 aa)) are Lumenal-facing. Residues 81–350 (VRQLKRVGEG…AMMSQAREML (270 aa)) enclose the Protein kinase domain. 3 N-linked (GlcNAc...) asparagine glycosylation sites follow: Asn165, Asn220, and Asn235.

Belongs to the protein kinase superfamily. Ser/Thr protein kinase family. STKL subfamily. In terms of tissue distribution, highest expression is observed in brain, skeletal muscle, kidney and heart in fetal and adult tissues.

The protein resides in the endoplasmic reticulum membrane. It catalyses the reaction 3-O-[beta-D-GalNAc-(1-&gt;3)-beta-D-GlcNAc-(1-&gt;4)-alpha-D-Man]-L-Thr-[protein] + ATP = 3-O-[beta-D-GalNAc-(1-&gt;3)-beta-D-GlcNAc-(1-&gt;4)-(O-6-P-alpha-D-Man)]-Thr-[protein] + ADP + H(+). Its function is as follows. Protein O-mannose kinase that specifically mediates phosphorylation at the 6-position of an O-mannose of the trisaccharide (N-acetylgalactosamine (GalNAc)-beta-1,3-N-acetylglucosamine (GlcNAc)-beta-1,4-mannose) to generate phosphorylated O-mannosyl trisaccharide (N-acetylgalactosamine-beta-1,3-N-acetylglucosamine-beta-1,4-(phosphate-6-)mannose). Phosphorylated O-mannosyl trisaccharide is a carbohydrate structure present in alpha-dystroglycan (DAG1), which is required for binding laminin G-like domain-containing extracellular proteins with high affinity. Only shows kinase activity when the GalNAc-beta-3-GlcNAc-beta-terminus is linked to the 4-position of O-mannose, suggesting that this disaccharide serves as the substrate recognition motif. The sequence is that of Protein O-mannose kinase (POMK) from Homo sapiens (Human).